Consider the following 1025-residue polypeptide: Exocyst complex component 6 (1025 aa).

Composition is skewed to basic and acidic residues over residues 1–10 (MSNKKQKEEI) and 22–52 (MVRD…ENVK). Disordered regions lie at residues 1 to 122 (MSNK…TRHL), 135 to 154 (LSSQ…DQAK), and 666 to 691 (QFGD…DENE). Residues 19 to 68 (LKTMVRDKDKEQKEEKREKKEKKRLEKKEAENVKKEKKKEKKELKKIGKA) are a coiled coil. Low complexity predominate over residues 71–93 (SGSITSDSSTHSGAQEFDSYGND). Positions 104 to 118 (SIDSNGLSSSGQPMQ) are enriched in polar residues. Composition is skewed to low complexity over residues 135–147 (LSSQ…LPHS) and 666–677 (QFGDKNLNNNNN). The segment covering 678 to 691 (NDDDDDYFDEDENE) has biased composition (acidic residues).

Belongs to the SEC15 family. As to quaternary structure, the exocyst complex is composed of sec3/exoc1, sec5/exoc2, sec6/exoc3, sec8/exoc4, sec10/exoc5, sec15/exoc6, exo70/exoc7 and exo84/exoc8.

It localises to the cytoplasm. Its subcellular location is the perinuclear region. It is found in the midbody. The protein localises to the midbody ring. Component of the exocyst complex involved in the docking of exocytic vesicles with fusion sites on the plasma membrane. This Dictyostelium discoideum (Social amoeba) protein is Exocyst complex component 6 (exoc6).